A 135-amino-acid chain; its full sequence is Small ribosomal subunit protein bS16 (135 aa).

The disordered stretch occupies residues 94–135 (IGTEMETWQQRNDSRLKRGLDRKAIRRKRKKEAEAKEKESAG). Basic and acidic residues-rich tracts occupy residues 105 to 116 (NDSRLKRGLDRK) and 124 to 135 (KEAEAKEKESAG).

The protein belongs to the bacterial ribosomal protein bS16 family.

This is Small ribosomal subunit protein bS16 from Chloroherpeton thalassium (strain ATCC 35110 / GB-78).